A 257-amino-acid chain; its full sequence is UPF0246 protein BPP3440 (257 aa).

The protein belongs to the UPF0246 family.

This Bordetella parapertussis (strain 12822 / ATCC BAA-587 / NCTC 13253) protein is UPF0246 protein BPP3440.